We begin with the raw amino-acid sequence, 99 residues long: Aspartyl/glutamyl-tRNA(Asn/Gln) amidotransferase subunit C (99 aa).

The protein belongs to the GatC family. In terms of assembly, heterotrimer of A, B and C subunits.

The catalysed reaction is L-glutamyl-tRNA(Gln) + L-glutamine + ATP + H2O = L-glutaminyl-tRNA(Gln) + L-glutamate + ADP + phosphate + H(+). It carries out the reaction L-aspartyl-tRNA(Asn) + L-glutamine + ATP + H2O = L-asparaginyl-tRNA(Asn) + L-glutamate + ADP + phosphate + 2 H(+). In terms of biological role, allows the formation of correctly charged Asn-tRNA(Asn) or Gln-tRNA(Gln) through the transamidation of misacylated Asp-tRNA(Asn) or Glu-tRNA(Gln) in organisms which lack either or both of asparaginyl-tRNA or glutaminyl-tRNA synthetases. The reaction takes place in the presence of glutamine and ATP through an activated phospho-Asp-tRNA(Asn) or phospho-Glu-tRNA(Gln). The chain is Aspartyl/glutamyl-tRNA(Asn/Gln) amidotransferase subunit C from Cupriavidus taiwanensis (strain DSM 17343 / BCRC 17206 / CCUG 44338 / CIP 107171 / LMG 19424 / R1) (Ralstonia taiwanensis (strain LMG 19424)).